The sequence spans 88 residues: Small ribosomal subunit protein bS20 (88 aa).

Residues 1-27 (MANTASAKKMTRKIAKRTAINRSRRSR) are disordered.

This sequence belongs to the bacterial ribosomal protein bS20 family.

Binds directly to 16S ribosomal RNA. The sequence is that of Small ribosomal subunit protein bS20 from Methylobacterium radiotolerans (strain ATCC 27329 / DSM 1819 / JCM 2831 / NBRC 15690 / NCIMB 10815 / 0-1).